A 134-amino-acid polypeptide reads, in one-letter code: MKKTPLLNSQVSQAVATIGHFDLLTINDAGMPIPNDERRIDLAVTKALPRFIDVLETVVTEMEIQKIYLAEEIKMHNPDQLKAIKGLIAEDVEIEFIPHSQMKEYLSHPLNKGNVRTGEITPFSNIILESNVTF.

His-20 serves as the catalytic Proton donor. Substrate is bound by residues Asp-28, His-99, and 123–125; that span reads FSN.

The protein belongs to the RbsD / FucU family. RbsD subfamily. As to quaternary structure, homodecamer.

The protein localises to the cytoplasm. The enzyme catalyses beta-D-ribopyranose = beta-D-ribofuranose. It participates in carbohydrate metabolism; D-ribose degradation; D-ribose 5-phosphate from beta-D-ribopyranose: step 1/2. Functionally, catalyzes the interconversion of beta-pyran and beta-furan forms of D-ribose. This Staphylococcus carnosus (strain TM300) protein is D-ribose pyranase.